Consider the following 351-residue polypeptide: Ferredoxin--NADP reductase (351 aa).

FAD-binding residues include threonine 14, aspartate 33, glutamine 41, tyrosine 46, alanine 86, phenylalanine 121, aspartate 287, and threonine 328.

Belongs to the ferredoxin--NADP reductase type 2 family. In terms of assembly, homodimer. FAD serves as cofactor.

It catalyses the reaction 2 reduced [2Fe-2S]-[ferredoxin] + NADP(+) + H(+) = 2 oxidized [2Fe-2S]-[ferredoxin] + NADPH. This Flavobacterium psychrophilum (strain ATCC 49511 / DSM 21280 / CIP 103535 / JIP02/86) protein is Ferredoxin--NADP reductase.